The following is a 364-amino-acid chain: Inner membrane ABC transporter permease protein YejB (364 aa).

Residues 1–8 (MGAYLIRR) are Periplasmic-facing. A helical membrane pass occupies residues 9-29 (LLLVIPTLWAIITINFFIVQI). The Cytoplasmic portion of the chain corresponds to 30 to 37 (APGGPVDQ). Residues 38–58 (AIAAIEFGNAGVLPGAGGEGV) form a helical membrane-spanning segment. Topologically, residues 59–135 (RASHAQTGVG…LTLIKDSLPV (77 aa)) are periplasmic. An ABC transmembrane type-1 domain is found at 133-348 (LPVSITLGLW…LIGLLLNIVS (216 aa)). Residues 136–156 (SITLGLWSTLIIYLVSIPLGI) form a helical membrane-spanning segment. Residues 157 to 172 (RKAVYNGSRFDVWSSA) lie on the Cytoplasmic side of the membrane. A helical transmembrane segment spans residues 173–193 (FIIIGYAIPAFLFAILLIVFF). The Periplasmic segment spans residues 194 to 224 (AGGSYFDLFPLRGLVSANFDSLPWYQKITDY). Residues 225–245 (LWHITLPVLATVIGGFAALTM) form a helical membrane-spanning segment. Over 246-284 (LTKNSFLDEVRKQYVVTARAKGVSEKNILWKHVFRNAML) the chain is Cytoplasmic. The chain crosses the membrane as a helical span at residues 285 to 305 (LVIAGFPATFISMFFTGSLLI). The Periplasmic portion of the chain corresponds to 306–326 (EVMFSLNGLGLLGYEATVSRD). The chain crosses the membrane as a helical span at residues 327-347 (YPVMFGTLYIFTLIGLLLNIV). The Cytoplasmic portion of the chain corresponds to 348-364 (SDISYTLVDPRIDFEGR).

It belongs to the binding-protein-dependent transport system permease family. OppBC subfamily.

It localises to the cell inner membrane. Probably part of a binding-protein-dependent transport system. Probably responsible for the translocation of the substrate across the membrane. The sequence is that of Inner membrane ABC transporter permease protein YejB (yejB) from Escherichia coli O157:H7.